The chain runs to 86 residues: Small ribosomal subunit protein uS15 (86 aa).

The protein belongs to the universal ribosomal protein uS15 family. In terms of assembly, part of the 30S ribosomal subunit. Forms a bridge to the 50S subunit in the 70S ribosome, contacting the 23S rRNA.

Its function is as follows. One of the primary rRNA binding proteins, it binds directly to 16S rRNA where it helps nucleate assembly of the platform of the 30S subunit by binding and bridging several RNA helices of the 16S rRNA. Functionally, forms an intersubunit bridge (bridge B4) with the 23S rRNA of the 50S subunit in the ribosome. This Mycoplasma pneumoniae (strain ATCC 29342 / M129 / Subtype 1) (Mycoplasmoides pneumoniae) protein is Small ribosomal subunit protein uS15.